A 217-amino-acid chain; its full sequence is Large ribosomal subunit protein bL25 (217 aa).

The interval Thr185–Glu217 is disordered. Over residues Val189–Glu217 the composition is skewed to acidic residues.

Belongs to the bacterial ribosomal protein bL25 family. CTC subfamily. As to quaternary structure, part of the 50S ribosomal subunit; part of the 5S rRNA/L5/L18/L25 subcomplex. Contacts the 5S rRNA. Binds to the 5S rRNA independently of L5 and L18.

Its function is as follows. This is one of the proteins that binds to the 5S RNA in the ribosome where it forms part of the central protuberance. The chain is Large ribosomal subunit protein bL25 from Desulfosudis oleivorans (strain DSM 6200 / JCM 39069 / Hxd3) (Desulfococcus oleovorans).